An 80-amino-acid chain; its full sequence is Cell division activator CedA (80 aa).

This sequence belongs to the CedA family.

Its function is as follows. Activates the cell division inhibited by chromosomal DNA over-replication. This Salmonella choleraesuis (strain SC-B67) protein is Cell division activator CedA.